The primary structure comprises 687 residues: C-mannosyltransferase dpy-19 (687 aa).

Helical transmembrane passes span 24 to 44 (GISG…VGFL), 170 to 190 (ITGV…LGVL), 191 to 211 (VSDS…NHGE), 223 to 243 (ESFA…IIKY), 253 to 273 (LLIS…FAFF), 276 to 296 (ICSI…AKTI), 303 to 323 (AFFI…ALYF), 324 to 344 (PSIW…GIRL), 347 to 367 (LYLL…KVGF), 415 to 435 (LSST…SWDF), and 454 to 474 (GEVI…VLIM).

It belongs to the dpy-19 family.

The protein resides in the endoplasmic reticulum membrane. Its function is as follows. C-mannosyltransferase that mediates C-mannosylation of tryptophan residues on target proteins such as unc-5 and mig-21. Mediates the attachment of alpha-mannose in C-C linkage to the C2 of the indole ring of tryptophan. C-mannosylation takes place in the endoplasmic reticulum and frequently found in thrombospondin (TSP) type-1 repeats and in the WSXWS motif of type I cytokine receptors. Required to orient neuroblasts QL and QR correctly on the anterior/posterior (A/P) axis: QL and QR are born in the same A/P position, but polarize and migrate left/right asymmetrically, QL migrates toward the posterior and QR migrates toward the anterior. Required with unc-40 to express mab-5 correctly in the Q cell descendants. The chain is C-mannosyltransferase dpy-19 from Caenorhabditis briggsae.